The primary structure comprises 151 residues: Neuroglobin (151 aa).

Positions 1-149 (MERPEHELIR…VVQAMSRGWN (149 aa)) constitute a Globin domain. Residues His64 and His96 each coordinate heme b.

Belongs to the globin family. In terms of assembly, monomer. Homodimer and homotetramer; disulfide-linked. Mainly monomeric but also detected as part of homodimers and homotetramers. Interacts with 14-3-3 proteins; regulates the phosphorylation of NGB. Could interact (ferrous form) with G-alpha(i) proteins (GTP-bound form). Post-translationally, phosphorylated during hypoxia by ERK1/ERK2. Phosphorylation regulates the heme pocket hexacoordination preventing the association of His-64 with the heme metal center. Thereby, promotes the access of dioxygen and nitrite to the heme and stimulates the nitrite reductase activity. Phosphorylation during hypoxia is stabilized by 14-3-3 proteins.

It is found in the cytoplasm. The protein localises to the cytosol. It localises to the mitochondrion matrix. The enzyme catalyses Fe(III)-heme b-[protein] + nitric oxide + H2O = Fe(II)-heme b-[protein] + nitrite + 2 H(+). Functionally, monomeric globin with a bis-histidyl six-coordinate heme-iron atom through which it can bind dioxygen, carbon monoxide and nitric oxide. Could help transport oxygen and increase its availability to the metabolically active neuronal tissues, though its low quantity in tissues as well as its high affinity for dioxygen, which may limit its oxygen-releasing ability, argue against it. The ferrous/deoxygenated form exhibits a nitrite reductase activity and it could produce nitric oxide which in turn inhibits cellular respiration in response to hypoxia. In its ferrous/deoxygenated state, it may also exhibit GDI (Guanine nucleotide Dissociation Inhibitor) activity toward heterotrimeric G-alpha proteins, thereby regulating signal transduction to facilitate neuroprotective responses in the wake of hypoxia and associated oxidative stress. This is Neuroglobin from Sus scrofa (Pig).